We begin with the raw amino-acid sequence, 638 residues long: Eukaryotic translation initiation factor 2A (638 aa).

WD repeat units lie at residues 287–329 and 331–370; these read SKEG…FDFG and GPRNCAYFNPFGNLIALAGFGNLPGAVEVWDVSKREKLAN. A compositionally biased stretch (basic and acidic residues) spans 441 to 450; sequence KITKAKHEGI. The disordered stretch occupies residues 441–593; the sequence is KITKAKHEGI…SDKERKIRSV (153 aa). Position 463 is a phosphothreonine (T463). Residues 492-501 show a composition bias toward low complexity; it reads AAAGGVNGNK. A compositionally biased stretch (basic and acidic residues) spans 583–593; that stretch reads ISDKERKIRSV.

Belongs to the WD repeat EIF2A family.

Functions in the early steps of protein synthesis of a small number of specific mRNAs. Acts by directing the binding of methionyl-tRNAi to 40S ribosomal subunits. In contrast to the eIF-2 complex, it binds methionyl-tRNAi to 40S subunits in a codon-dependent manner, whereas the eIF-2 complex binds methionyl-tRNAi to 40S subunits in a GTP-dependent manner. In Drosophila melanogaster (Fruit fly), this protein is Eukaryotic translation initiation factor 2A.